Reading from the N-terminus, the 420-residue chain is Multifunctional CCA protein (420 aa).

ATP contacts are provided by glycine 8 and arginine 11. Residues glycine 8 and arginine 11 each contribute to the CTP site. The Mg(2+) site is built by aspartate 21 and aspartate 23. Residues arginine 91, arginine 137, and arginine 140 each contribute to the ATP site. CTP is bound by residues arginine 91, arginine 137, and arginine 140. An HD domain is found at 228–334; that stretch reads TFVHTMLVLQ…LKLFNRLDVW (107 aa).

The protein belongs to the tRNA nucleotidyltransferase/poly(A) polymerase family. Bacterial CCA-adding enzyme type 1 subfamily. Monomer. Can also form homodimers and oligomers. Mg(2+) is required as a cofactor. Requires Ni(2+) as cofactor.

The enzyme catalyses a tRNA precursor + 2 CTP + ATP = a tRNA with a 3' CCA end + 3 diphosphate. The catalysed reaction is a tRNA with a 3' CCA end + 2 CTP + ATP = a tRNA with a 3' CCACCA end + 3 diphosphate. Functionally, catalyzes the addition and repair of the essential 3'-terminal CCA sequence in tRNAs without using a nucleic acid template. Adds these three nucleotides in the order of C, C, and A to the tRNA nucleotide-73, using CTP and ATP as substrates and producing inorganic pyrophosphate. tRNA 3'-terminal CCA addition is required both for tRNA processing and repair. Also involved in tRNA surveillance by mediating tandem CCA addition to generate a CCACCA at the 3' terminus of unstable tRNAs. While stable tRNAs receive only 3'-terminal CCA, unstable tRNAs are marked with CCACCA and rapidly degraded. The polypeptide is Multifunctional CCA protein (Pasteurella multocida (strain Pm70)).